The primary structure comprises 549 residues: Polycomb group RING finger protein 3 homolog mig-32 (549 aa).

The tract at residues 1–263 (MTRKRPALAE…EESMRQKYGQ (263 aa)) is disordered. Positions 12–29 (VSSSRSRVTRRSTTGAPS) are enriched in low complexity. Acidic residues-rich tracts occupy residues 38–49 (PESDADSEDDYD) and 87–100 (MDDD…DGEV). A compositionally biased stretch (basic residues) spans 118–130 (KTAKLQTKKKKKK). The span at 134–144 (PETPPTSPSPS) shows a compositional bias: pro residues. Over residues 145 to 156 (PSRSVSPSTTKS) the composition is skewed to low complexity. Residues 205–235 (EEIKLRERAERKARRIEEAKNRPKLTIEQKL) are compositionally biased toward basic and acidic residues. A coiled-coil region spans residues 206–260 (EIKLRERAERKARRIEEAKNRPKLTIEQKLAKLRKKKERRERRKEQEKEESMRQK). Residues 236 to 247 (AKLRKKKERRER) are compositionally biased toward basic residues. Basic and acidic residues predominate over residues 248–258 (RKEQEKEESMR). Residues 329–368 (CGICDGYIVDATTIIDCMHTFCKSCLLTYFESDNNTCPTC) form an RING-type zinc finger.

Component of a PRC1-like complex.

Its subcellular location is the nucleus. The protein resides in the nucleolus. Its function is as follows. Component of a Polycomb group (PcG) multiprotein PRC1-like complex, a complex class required to maintain the transcriptionally repressive state of many genes, throughout development. Required for ubiquitination of histone H2A. Plays a role in the formation of the male-specific genital sensilla (simple sense organs) known as rays. Required for normal migration of the hermaphrodite specific neurons (HSN) and for extension of some neuronal processes. Represses vulval fates in hypodermal cells that do not normally contribute to vulval development. This is Polycomb group RING finger protein 3 homolog mig-32 from Caenorhabditis elegans.